A 428-amino-acid chain; its full sequence is D-amino acid dehydrogenase (428 aa).

3–17 (VVILGSGVVGVASAY) serves as a coordination point for FAD.

It belongs to the DadA oxidoreductase family. FAD serves as cofactor.

It catalyses the reaction a D-alpha-amino acid + A + H2O = a 2-oxocarboxylate + AH2 + NH4(+). It participates in amino-acid degradation; D-alanine degradation; NH(3) and pyruvate from D-alanine: step 1/1. Its function is as follows. Oxidative deamination of D-amino acids. The polypeptide is D-amino acid dehydrogenase (Burkholderia mallei (strain NCTC 10247)).